The following is a 227-amino-acid chain: Probable methylthioribulose-1-phosphate dehydratase (227 aa).

C87 lines the substrate pocket. H105 and H107 together coordinate Zn(2+). The active-site Proton donor/acceptor is the E129. H185 lines the Zn(2+) pocket.

The protein belongs to the aldolase class II family. MtnB subfamily. Zn(2+) serves as cofactor.

It is found in the cytoplasm. It catalyses the reaction 5-(methylsulfanyl)-D-ribulose 1-phosphate = 5-methylsulfanyl-2,3-dioxopentyl phosphate + H2O. Its pathway is amino-acid biosynthesis; L-methionine biosynthesis via salvage pathway; L-methionine from S-methyl-5-thio-alpha-D-ribose 1-phosphate: step 2/6. Catalyzes the dehydration of methylthioribulose-1-phosphate (MTRu-1-P) into 2,3-diketo-5-methylthiopentyl-1-phosphate (DK-MTP-1-P). The chain is Probable methylthioribulose-1-phosphate dehydratase from Drosophila ananassae (Fruit fly).